The chain runs to 593 residues: Pentatricopeptide repeat-containing protein At5g24830 (593 aa).

12 PPR repeats span residues 120-154, 155-189, 190-224, 225-256, 264-298, 299-333, 334-368, 369-403, 404-438, 439-473, 474-508, and 509-543; these read CLSI…GVIP, GLIT…GPSP, NCVS…GIRP, NRVT…ILDS, DIVI…NVPA, DSVV…GVNP, DVFT…GVAP, DQIS…SLLP, EVLL…GVKP, NVYT…KIHP, DTTT…GCQP, and DIIT…GITI.

Belongs to the PPR family. P subfamily.

The polypeptide is Pentatricopeptide repeat-containing protein At5g24830 (Arabidopsis thaliana (Mouse-ear cress)).